The primary structure comprises 169 residues: Phosphopantetheine adenylyltransferase (169 aa).

T13 lines the substrate pocket. Residues 13-14 (TF) and H21 each bind ATP. The substrate site is built by K45, L82, and R96. Residues 97 to 99 (GLR), E107, and 132 to 138 (HQFISSR) each bind ATP.

The protein belongs to the bacterial CoaD family. In terms of assembly, homohexamer. It depends on Mg(2+) as a cofactor.

The protein resides in the cytoplasm. It catalyses the reaction (R)-4'-phosphopantetheine + ATP + H(+) = 3'-dephospho-CoA + diphosphate. It functions in the pathway cofactor biosynthesis; coenzyme A biosynthesis; CoA from (R)-pantothenate: step 4/5. Reversibly transfers an adenylyl group from ATP to 4'-phosphopantetheine, yielding dephospho-CoA (dPCoA) and pyrophosphate. This chain is Phosphopantetheine adenylyltransferase, found in Acidiphilium cryptum (strain JF-5).